A 342-amino-acid chain; its full sequence is DNA-directed RNA polymerase subunit alpha (342 aa).

Residues 1-239 are alpha N-terminal domain (alpha-NTD); sequence MTTFLAKNWS…DQLQVFINFQ (239 aa). The segment at 254 to 342 is alpha C-terminal domain (alpha-CTD); the sequence is INPVLLKKVY…SLAKKHEDQY (89 aa).

It belongs to the RNA polymerase alpha chain family. As to quaternary structure, homodimer. The RNAP catalytic core consists of 2 alpha, 1 beta, 1 beta' and 1 omega subunit. When a sigma factor is associated with the core the holoenzyme is formed, which can initiate transcription.

It carries out the reaction RNA(n) + a ribonucleoside 5'-triphosphate = RNA(n+1) + diphosphate. Functionally, DNA-dependent RNA polymerase catalyzes the transcription of DNA into RNA using the four ribonucleoside triphosphates as substrates. The protein is DNA-directed RNA polymerase subunit alpha of Orientia tsutsugamushi (strain Boryong) (Rickettsia tsutsugamushi).